Consider the following 464-residue polypeptide: Rab GDP-dissociation inhibitor (464 aa).

Belongs to the Rab GDI family. Interacts with the GDP-bound form of Rab GTPase YPT7.

Its function is as follows. Regulates the GDP/GTP exchange reaction of YPT7 by inhibiting the dissociation of GDP from it, and the subsequent binding of GTP to YTP7. The sequence is that of Rab GDP-dissociation inhibitor (GDI1) from Pyricularia oryzae (strain 70-15 / ATCC MYA-4617 / FGSC 8958) (Rice blast fungus).